Reading from the N-terminus, the 228-residue chain is Ribosomal RNA small subunit methyltransferase G (228 aa).

Residues G70, L75, 120-121 (AE), and R138 each bind S-adenosyl-L-methionine. The segment at 207 to 228 (RRGDTRGPNRRVSPRRTGGAPA) is disordered.

The protein belongs to the methyltransferase superfamily. RNA methyltransferase RsmG family.

It localises to the cytoplasm. In terms of biological role, specifically methylates the N7 position of guanine in position 518 of 16S rRNA. This Mycobacterium marinum (strain ATCC BAA-535 / M) protein is Ribosomal RNA small subunit methyltransferase G.